A 912-amino-acid polypeptide reads, in one-letter code: Tubulin polyglutamylase TTLL7 (912 aa).

Positions 38-390 constitute a TTL domain; sequence KGIITANVAG…RTSDKRKNLA (353 aa). ATP-binding positions include Lys-160, 166 to 167, 188 to 191, and 201 to 203; these read MG, QEYI, and KFD. Arg-227 is an L-glutamate binding site. ATP is bound at residue 249-250; sequence TN. Residues Tyr-251, Ser-252, and Lys-271 each coordinate L-glutamate. The Mg(2+) site is built by Asp-336, Glu-349, and Asn-351. An L-glutamate-binding site is contributed by Lys-367. The segment at 388–450 is c-MTBD region; sequence NLAKQKAEAQ…VSQEEHENRH (63 aa). Disordered regions lie at residues 547–570 and 658–688; these read YGSS…ENEK and PTSA…STNT. Positions 549–563 are enriched in low complexity; it reads SSDSSYDSSSSSSNS. The segment covering 659 to 671 has biased composition (polar residues); the sequence is TSASRSHSLNRAS.

It belongs to the tubulin--tyrosine ligase family. Interacts with both alpha- and beta-tubulin (via C-terminal tubulin tails). Mg(2+) is required as a cofactor. As to expression, highly expressed in brain, testis and trachea. Expressed in brain, heart, kidney, liver, lung, muscle and trachea. In the brain, highly expressed in hippocampus, thalamus, olfactory bulb and cerebellum cortex, corpus callosum and striatum.

It is found in the cell projection. The protein resides in the cilium. The protein localises to the cytoplasm. It localises to the cytoskeleton. Its subcellular location is the cilium basal body. It is found in the dendrite. The protein resides in the perikaryon. It carries out the reaction L-glutamyl-[protein] + L-glutamate + ATP = gamma-L-glutamyl-L-glutamyl-[protein] + ADP + phosphate + H(+). The catalysed reaction is (L-glutamyl)(n)-gamma-L-glutamyl-L-glutamyl-[protein] + L-glutamate + ATP = (L-glutamyl)(n+1)-gamma-L-glutamyl-L-glutamyl-[protein] + ADP + phosphate + H(+). In terms of biological role, polyglutamylase which modifies tubulin, generating polyglutamate side chains of variable lengths on the gamma-carboxyl group of specific glutamate residues within the C-terminal tail of tubulin. Mediates both ATP-dependent initiation and elongation steps of the polyglutamylation reaction. Preferentially modifies the beta-tubulin tail over an alpha-tail. Competes with monoglycylase TTLL3 for modification site on beta-tubulin substrate, thereby creating an anticorrelation between glycylation and glutamylation reactions. Required for neurite growth; responsible for the strong increase in tubulin polyglutamylation during postnatal neuronal maturation. The sequence is that of Tubulin polyglutamylase TTLL7 from Mus musculus (Mouse).